Reading from the N-terminus, the 541-residue chain is RING finger protein 37 (541 aa).

Residues aspartate 258–proline 338 enclose the U-box domain. Arginine 451 carries the post-translational modification Asymmetric dimethylarginine. The RING-type zinc finger occupies cysteine 483–glutamine 528.

As to quaternary structure, interacts with UBE2L3. Interacts with VCP. Expressed in liver, heart, brain, kidney and testis.

Its subcellular location is the nucleus. The catalysed reaction is S-ubiquitinyl-[E2 ubiquitin-conjugating enzyme]-L-cysteine + [acceptor protein]-L-lysine = [E2 ubiquitin-conjugating enzyme]-L-cysteine + N(6)-ubiquitinyl-[acceptor protein]-L-lysine.. Its pathway is protein modification; protein ubiquitination. May have a ubiquitin-protein ligase activity acting as an E3 ubiquitin-protein ligase or as a ubiquitin-ubiquitin ligase promoting elongation of ubiquitin chains on substrates. This Homo sapiens (Human) protein is RING finger protein 37.